The primary structure comprises 89 residues: MSLSVEAKAKIVSEFGRGTNDSGSTEVQVALLTAQINHLQGHFAEHKKDHHSRRGLLRMVSQRRKLLDYLKRKDVARYTALIERLGLRR.

The protein belongs to the universal ribosomal protein uS15 family. Part of the 30S ribosomal subunit. Forms a bridge to the 50S subunit in the 70S ribosome, contacting the 23S rRNA.

In terms of biological role, one of the primary rRNA binding proteins, it binds directly to 16S rRNA where it helps nucleate assembly of the platform of the 30S subunit by binding and bridging several RNA helices of the 16S rRNA. Functionally, forms an intersubunit bridge (bridge B4) with the 23S rRNA of the 50S subunit in the ribosome. The protein is Small ribosomal subunit protein uS15 of Enterobacter sp. (strain 638).